Consider the following 373-residue polypeptide: Putative glutamate--cysteine ligase 2-2 (373 aa).

Belongs to the glutamate--cysteine ligase type 2 family. YbdK subfamily.

The catalysed reaction is L-cysteine + L-glutamate + ATP = gamma-L-glutamyl-L-cysteine + ADP + phosphate + H(+). Functionally, ATP-dependent carboxylate-amine ligase which exhibits weak glutamate--cysteine ligase activity. This is Putative glutamate--cysteine ligase 2-2 from Legionella pneumophila (strain Corby).